The chain runs to 245 residues: tRNA (guanine-N(7)-)-methyltransferase (245 aa).

S-adenosyl-L-methionine-binding positions include Gly70, 93 to 94 (EI), 126 to 127 (NA), and Leu146. Asp149 is an active-site residue. 224–226 (SEE) is an S-adenosyl-L-methionine binding site.

Belongs to the class I-like SAM-binding methyltransferase superfamily. TrmB family.

It localises to the nucleus. The enzyme catalyses guanosine(46) in tRNA + S-adenosyl-L-methionine = N(7)-methylguanosine(46) in tRNA + S-adenosyl-L-homocysteine. Its pathway is tRNA modification; N(7)-methylguanine-tRNA biosynthesis. Functionally, catalyzes the formation of N(7)-methylguanine at position 46 (m7G46) in tRNA. The chain is tRNA (guanine-N(7)-)-methyltransferase from Aedes aegypti (Yellowfever mosquito).